A 182-amino-acid chain; its full sequence is MKHPKRPVIRSTTVIGVLRDGKAALGSDGQMTLGNTVVKHSTRKIRSLYQGRLLAGFAGATADAITLLDRFEEKLEAYNGKLERAAVELARDWRTDKYLRRLEAMLAIVSSERALIISGTGDVIEPEDGIVAIGSGSMYALAAARSLMKHTGLSARDIVRESLETAAEICIYTNNHIVVEEV.

T12 is an active-site residue. Na(+)-binding residues include A167, C170, and T173.

The protein belongs to the peptidase T1B family. HslV subfamily. A double ring-shaped homohexamer of HslV is capped on each side by a ring-shaped HslU homohexamer. The assembly of the HslU/HslV complex is dependent on binding of ATP.

The protein localises to the cytoplasm. The catalysed reaction is ATP-dependent cleavage of peptide bonds with broad specificity.. With respect to regulation, allosterically activated by HslU binding. Functionally, protease subunit of a proteasome-like degradation complex believed to be a general protein degrading machinery. The sequence is that of ATP-dependent protease subunit HslV from Chlorobium luteolum (strain DSM 273 / BCRC 81028 / 2530) (Pelodictyon luteolum).